A 275-amino-acid polypeptide reads, in one-letter code: Thiazole synthase (275 aa).

The active-site Schiff-base intermediate with DXP is the Lys108. Residues Gly169, 196–197 (AG), and 218–219 (NT) contribute to the 1-deoxy-D-xylulose 5-phosphate site.

It belongs to the ThiG family. Homotetramer. Forms heterodimers with either ThiH or ThiS.

It localises to the cytoplasm. The catalysed reaction is [ThiS sulfur-carrier protein]-C-terminal-Gly-aminoethanethioate + 2-iminoacetate + 1-deoxy-D-xylulose 5-phosphate = [ThiS sulfur-carrier protein]-C-terminal Gly-Gly + 2-[(2R,5Z)-2-carboxy-4-methylthiazol-5(2H)-ylidene]ethyl phosphate + 2 H2O + H(+). The protein operates within cofactor biosynthesis; thiamine diphosphate biosynthesis. In terms of biological role, catalyzes the rearrangement of 1-deoxy-D-xylulose 5-phosphate (DXP) to produce the thiazole phosphate moiety of thiamine. Sulfur is provided by the thiocarboxylate moiety of the carrier protein ThiS. In vitro, sulfur can be provided by H(2)S. The sequence is that of Thiazole synthase from Ralstonia nicotianae (strain ATCC BAA-1114 / GMI1000) (Ralstonia solanacearum).